The primary structure comprises 1103 residues: Isoleucine--tRNA ligase (1103 aa).

The segment at 1-25 is disordered; the sequence is MSENVYPKANEGGETAHVAPNPSFP. The short motif at 65–75 is the 'HIGH' region element; that stretch reads PFANGLPHYGH. A 'KMSKS' region motif is present at residues 649–653; it reads KMSKH. K652 contributes to the ATP binding site.

It belongs to the class-I aminoacyl-tRNA synthetase family. IleS type 2 subfamily. In terms of assembly, monomer. It depends on Zn(2+) as a cofactor.

The protein resides in the cytoplasm. It catalyses the reaction tRNA(Ile) + L-isoleucine + ATP = L-isoleucyl-tRNA(Ile) + AMP + diphosphate. Catalyzes the attachment of isoleucine to tRNA(Ile). As IleRS can inadvertently accommodate and process structurally similar amino acids such as valine, to avoid such errors it has two additional distinct tRNA(Ile)-dependent editing activities. One activity is designated as 'pretransfer' editing and involves the hydrolysis of activated Val-AMP. The other activity is designated 'posttransfer' editing and involves deacylation of mischarged Val-tRNA(Ile). The protein is Isoleucine--tRNA ligase of Bifidobacterium longum (strain NCC 2705).